Reading from the N-terminus, the 108-residue chain is UPF0145 protein Patl_2194 (108 aa).

The protein belongs to the UPF0145 family.

The protein is UPF0145 protein Patl_2194 of Pseudoalteromonas atlantica (strain T6c / ATCC BAA-1087).